Consider the following 392-residue polypeptide: MSRAFIIDPTISAIDGLYDLLGIGIPNQGGILYSSLEYFEKALEELAAAFPGDGWLGSAADKYAGKNRNHVNFFQELADLDRQLISLIHDQANAVQTTRDILEGAKKGLEFVRPVAVDLTYIPVVGHALSAAFQAPFCAGAMAVVGGALAYLVVKTLINATQLLKLLAKLAELVAAAIADIISDVADIIKGTLGEVWEFITNALNGLKELWDKLTGWVTGLFSRGWSNLESFFAGVPGLTGATSGLSQVTGLFGAAGLSASSGLAHADSLASSASLPALAGIGGGSGFGGLPSLAQVHAASTRQALRPRADGPVGAAAEQVGGQSQLVSAQGSQGMGGPVGMGGMHPSSGASKGTTTKKYSEGAAAGTEDAERAPVEADAGGGQKVLVRNVV.

A disordered region spans residues 302-392 (TRQALRPRAD…GQKVLVRNVV (91 aa)). Gly residues predominate over residues 334 to 344 (QGMGGPVGMGG).

In terms of assembly, homodimer; disulfide-linked. An artificial EsxB-EsxA heterodimer interacts with EspA.

The protein resides in the secreted. Functionally, required for secretion of EsxA (ESAT-6) and EsxB (CFP-10) and for virulence. Involved in translocation of bacteria from the host (human) phagolysosome to the host cytoplasm. The protein is ESX-1 secretion-associated protein EspA of Mycobacterium tuberculosis (strain ATCC 25618 / H37Rv).